We begin with the raw amino-acid sequence, 286 residues long: Phosducin-like protein 2 (286 aa).

Serine 35 and serine 62 each carry phosphoserine. Residues 96–286 form a thioredoxin fold region; that stretch reads FGEVFHINKP…INDDDDGFFD (191 aa).

The protein belongs to the phosducin family. Interacts with the G protein beta-gamma subunit complex (STE4-STE18 complex). Interacts with CCT2; this interaction leads to inhibition of CCT complex mediated actin folding.

The protein localises to the cytoplasm. In terms of biological role, essential for cell growth. Inhibits early G-protein signaling events following pheromone stimulation. Inhibits the folding activity of the chaperonin-containing T-complex (CCT) CCT2 which leads to inhibition of cytoskeletal actin folding. Plays a role in cell cycle progression in G1/S phase. In Saccharomyces cerevisiae (strain ATCC 204508 / S288c) (Baker's yeast), this protein is Phosducin-like protein 2.